The sequence spans 135 residues: Mini-ribonuclease 3 (135 aa).

Residue Asp17 is part of the active site.

Belongs to the MrnC RNase family. Homodimer. Mg(2+) is required as a cofactor.

Its subcellular location is the cytoplasm. Its function is as follows. Involved in correct processing of both the 5' and 3' ends of 23S rRNA precursor. Processes 30S rRNA precursor transcript even in absence of ribonuclease 3 (Rnc); Rnc processes 30S rRNA into smaller rRNA precursors. The protein is Mini-ribonuclease 3 of Bacillus cereus (strain ATCC 14579 / DSM 31 / CCUG 7414 / JCM 2152 / NBRC 15305 / NCIMB 9373 / NCTC 2599 / NRRL B-3711).